The sequence spans 316 residues: tRNA-dihydrouridine(16) synthase (316 aa).

FMN is bound by residues Pro-7–Glu-9 and Gln-68. Catalysis depends on Cys-98, which acts as the Proton donor. FMN contacts are provided by residues Lys-139, Asn-200 to Glu-202, and Gly-224 to Arg-225.

It belongs to the Dus family. DusC subfamily. The cofactor is FMN.

It catalyses the reaction 5,6-dihydrouridine(16) in tRNA + NADP(+) = uridine(16) in tRNA + NADPH + H(+). It carries out the reaction 5,6-dihydrouridine(16) in tRNA + NAD(+) = uridine(16) in tRNA + NADH + H(+). In terms of biological role, catalyzes the synthesis of 5,6-dihydrouridine (D), a modified base found in the D-loop of most tRNAs, via the reduction of the C5-C6 double bond in target uridines. Specifically modifies U16 in tRNAs. The protein is tRNA-dihydrouridine(16) synthase of Escherichia coli O157:H7.